A 479-amino-acid polypeptide reads, in one-letter code: Sucrose-6-phosphate hydrolase (479 aa).

Substrate-binding positions include 44–47, Gln-63, 106–107, 166–167, and Glu-223; these read LLND, YS, and RD. Residue Asp-47 is part of the active site.

The protein belongs to the glycosyl hydrolase 32 family.

It localises to the cytoplasm. It catalyses the reaction Hydrolysis of terminal non-reducing beta-D-fructofuranoside residues in beta-D-fructofuranosides.. The protein operates within glycan biosynthesis; sucrose metabolism. This chain is Sucrose-6-phosphate hydrolase (scrB), found in Streptococcus mutans serotype c (strain ATCC 700610 / UA159).